The following is a 132-amino-acid chain: Small ribosomal subunit protein uS8 (132 aa).

Belongs to the universal ribosomal protein uS8 family. As to quaternary structure, part of the 30S ribosomal subunit. Contacts proteins S5 and S12.

In terms of biological role, one of the primary rRNA binding proteins, it binds directly to 16S rRNA central domain where it helps coordinate assembly of the platform of the 30S subunit. The chain is Small ribosomal subunit protein uS8 from Clostridium perfringens (strain ATCC 13124 / DSM 756 / JCM 1290 / NCIMB 6125 / NCTC 8237 / Type A).